We begin with the raw amino-acid sequence, 365 residues long: Outer membrane protein assembly factor BamC (365 aa).

The first 16 residues, Met-1–Ala-16, serve as a signal peptide directing secretion. Residue Cys-17 is the site of N-palmitoyl cysteine attachment. The S-diacylglycerol cysteine moiety is linked to residue Cys-17.

The protein belongs to the BamC family. In terms of assembly, part of the Bam complex.

It is found in the cell outer membrane. In terms of biological role, part of the outer membrane protein assembly complex, which is involved in assembly and insertion of beta-barrel proteins into the outer membrane. In Shewanella oneidensis (strain ATCC 700550 / JCM 31522 / CIP 106686 / LMG 19005 / NCIMB 14063 / MR-1), this protein is Outer membrane protein assembly factor BamC.